The chain runs to 961 residues: FYVE, RhoGEF and PH domain-containing protein 1 (961 aa).

Residues 1-11 (MHGHRAPGGAG) are compositionally biased toward gly residues. The interval 1-353 (MHGHRAPGGA…DEEEEEEKDR (353 aa)) is disordered. Low complexity predominate over residues 27-38 (PPACADSDPGAS). Ser-48 carries the phosphoserine modification. Basic and acidic residues predominate over residues 125–135 (PHPEGPQRLRS). Composition is skewed to pro residues over residues 156 to 165 (GPKPQVPPKP) and 172 to 190 (RMPP…PLPA). The short motif at 171–187 (PRMPPPLEPIPPPPSRP) is the SH3-binding element. A compositionally biased stretch (low complexity) spans 199–213 (APRAEASPSSAAVSS). Phosphoserine is present on Ser-205. Positions 231 to 255 (VPGPSPGPPEPVMLPQPTSQPPVPQ) are enriched in pro residues. Residues 273–284 (RDGEKVPNRDSG) show a composition bias toward basic and acidic residues. 2 stretches are compositionally biased toward low complexity: residues 285 to 294 (IDSISSPSNS) and 316 to 325 (ALASVPVALA). The segment covering 335–351 (VDSDLEEEDDEEEEEEK) has biased composition (acidic residues). The 189-residue stretch at 373–561 (KVFHIANELL…ATAAEHSNAA (189 aa)) folds into the DH domain. In terms of domain architecture, PH 1 spans 590–689 (ELIKEGHILK…WVQAINSTLL (100 aa)). The interval 702-726 (NSTNREDEDTPPNSPNVDLGKRAPT) is disordered. Thr-711 carries the post-translational modification Phosphothreonine. Ser-715 carries the phosphoserine modification. An FYVE-type zinc finger spans residues 730–790 (EKEVTMCMRC…VCTDCYVALH (61 aa)). Positions 736, 739, 753, 756, 761, 764, 782, and 785 each coordinate Zn(2+). The 101-residue stretch at 821–921 (NSVICSFLHY…WMAVLGRAGR (101 aa)) folds into the PH 2 domain. Residues 925–961 (FCPGPTLSEDREMEEAPVAALGATAEPPESPQTRDKT) form a disordered region.

Interacts with DBNL/ABP1 and CTTN. May interact with CCPG1. Binds CDC42. As to expression, expressed in fetal heart, brain, lung, kidney and placenta. Less expressed in liver; adult heart, brain, lung, pancreas and skeletal muscle.

The protein resides in the cytoplasm. It localises to the cell projection. It is found in the lamellipodium. Its subcellular location is the ruffle. The protein localises to the cytoskeleton. Its function is as follows. Activates CDC42, a member of the Ras-like family of Rho- and Rac proteins, by exchanging bound GDP for free GTP. Plays a role in regulating the actin cytoskeleton and cell shape. The protein is FYVE, RhoGEF and PH domain-containing protein 1 (FGD1) of Homo sapiens (Human).